Reading from the N-terminus, the 478-residue chain is Putative multidrug resistance outer membrane protein MdtQ (478 aa).

Positions 1–21 are cleaved as a signal peptide; that stretch reads MNRDSFYPAIACFPLLLMLAG. The N-palmitoyl cysteine moiety is linked to residue cysteine 22. Cysteine 22 carries S-diacylglycerol cysteine lipidation.

Belongs to the outer membrane factor (OMF) (TC 1.B.17) family.

It localises to the cell outer membrane. Its function is as follows. Could be involved in resistance to puromycin, acriflavine and tetraphenylarsonium chloride. This is Putative multidrug resistance outer membrane protein MdtQ (mdtQ) from Escherichia coli (strain K12).